The sequence spans 711 residues: Ribosomal RNA large subunit methyltransferase K/L (711 aa).

In terms of domain architecture, THUMP spans 43 to 154 (LAYRITLWSR…RGQITLGINF (112 aa)).

It belongs to the methyltransferase superfamily. RlmKL family.

The protein localises to the cytoplasm. The enzyme catalyses guanosine(2445) in 23S rRNA + S-adenosyl-L-methionine = N(2)-methylguanosine(2445) in 23S rRNA + S-adenosyl-L-homocysteine + H(+). It catalyses the reaction guanosine(2069) in 23S rRNA + S-adenosyl-L-methionine = N(2)-methylguanosine(2069) in 23S rRNA + S-adenosyl-L-homocysteine + H(+). In terms of biological role, specifically methylates the guanine in position 2445 (m2G2445) and the guanine in position 2069 (m7G2069) of 23S rRNA. The polypeptide is Ribosomal RNA large subunit methyltransferase K/L (Shewanella loihica (strain ATCC BAA-1088 / PV-4)).